Here is a 278-residue protein sequence, read N- to C-terminus: Ethanolamine utilization protein EutJ (278 aa).

Belongs to the EutJ family.

It participates in amine and polyamine degradation; ethanolamine degradation. Functionally, may protect ethanolamine ammonia-lyase (EAL, eutB-eutC) from inhibition, may function in assembling the bacterial microcompartment and/or in refolding EAL, suggesting it may have chaperone activity. In Escherichia coli (strain K12), this protein is Ethanolamine utilization protein EutJ (eutJ).